The primary structure comprises 1176 residues: Pesticidal crystal protein Cry1Cb (1176 aa).

The protein belongs to the delta endotoxin family.

Its function is as follows. Promotes colloidosmotic lysis by binding to the midgut epithelial cells of insects. Toxic to Spodoptera exigua and Trichoplusia ni. The chain is Pesticidal crystal protein Cry1Cb (cry1Cb) from Bacillus thuringiensis subsp. galleriae.